The following is a 98-amino-acid chain: Protein S100-A11 (98 aa).

Thr5 carries the post-translational modification Phosphothreonine. EF-hand domains are found at residues 12 to 47 (LIAV…AFTK) and 50 to 85 (KDPG…LAIA). Lys22 carries the post-translational modification N6-acetyllysine. Ser26, His28, Glu33, Asp63, Asn65, Asp67, Gln69, and Glu74 together coordinate Ca(2+).

This sequence belongs to the S-100 family. In terms of assembly, homodimer; disulfide-linked. Phosphorylation at Thr-5 significantly suppresses homodimerization and promotes association with NCL/nucleolin which induces nuclear translocation.

It is found in the cytoplasm. It localises to the nucleus. Facilitates the differentiation and the cornification of keratinocytes. In Rattus norvegicus (Rat), this protein is Protein S100-A11 (S100a11).